The chain runs to 66 residues: DNA-directed RNA polymerase subunit Rpo10 (66 aa).

Zn(2+) is bound by residues Cys-7, Cys-10, Cys-44, and Cys-45.

Belongs to the archaeal Rpo10/eukaryotic RPB10 RNA polymerase subunit family. In terms of assembly, part of the RNA polymerase complex. It depends on Zn(2+) as a cofactor.

The protein resides in the cytoplasm. The catalysed reaction is RNA(n) + a ribonucleoside 5'-triphosphate = RNA(n+1) + diphosphate. In terms of biological role, DNA-dependent RNA polymerase (RNAP) catalyzes the transcription of DNA into RNA using the four ribonucleoside triphosphates as substrates. The chain is DNA-directed RNA polymerase subunit Rpo10 from Saccharolobus islandicus (strain Y.N.15.51 / Yellowstone #2) (Sulfolobus islandicus).